Here is a 537-residue protein sequence, read N- to C-terminus: Probable alpha-galactosidase A (537 aa).

Residues 1–23 form the signal peptide; sequence MNQGTKSILLAATLAAIPWQVYG. A disulfide bond links Cys46 and Cys78. Residues Asn49, Asn87, Asn93, and Asn123 are each glycosylated (N-linked (GlcNAc...) asparagine). Cys126 and Cys156 are joined by a disulfide. Asp154 (nucleophile) is an active-site residue. An N-linked (GlcNAc...) asparagine glycan is attached at Asn203. The Proton donor role is filled by Asp212. Asn355 and Asn436 each carry an N-linked (GlcNAc...) asparagine glycan. The 125-residue stretch at 413-537 folds into the Ricin B-type lectin domain; that stretch reads CSSVVPTGLV…FGLPSGVQLS (125 aa). 2 disulfides stabilise this stretch: Cys430/Cys444 and Cys469/Cys482. Asn491 is a glycosylation site (N-linked (GlcNAc...) asparagine).

Belongs to the glycosyl hydrolase 27 family.

It localises to the secreted. The catalysed reaction is Hydrolysis of terminal, non-reducing alpha-D-galactose residues in alpha-D-galactosides, including galactose oligosaccharides, galactomannans and galactolipids.. In terms of biological role, hydrolyzes a variety of simple alpha-D-galactoside as well as more complex molecules such as oligosaccharides and polysaccharides. In Aspergillus niger (strain ATCC MYA-4892 / CBS 513.88 / FGSC A1513), this protein is Probable alpha-galactosidase A (aglA).